A 348-amino-acid chain; its full sequence is Ileal sodium/bile acid cotransporter (348 aa).

At 1-28 the chain is on the extracellular side; it reads MNDPNSCVDNATVCSGASCVVPESNFNN. Residue N10 is glycosylated (N-linked (GlcNAc...) asparagine). A helical transmembrane segment spans residues 29-49; sequence ILSVVLSTVLTILLALVMFSM. Topologically, residues 50–82 are cytoplasmic; that stretch reads GCNVEIKKFLGHIKRPWGICVGFLCQFGIMPLT. Residues 83-103 form a helical membrane-spanning segment; it reads GFILSVAFDILPLQAVVVLII. Residues 104–126 are Extracellular-facing; that stretch reads GCCPGGTASNILAYWVDGDMDLS. Residues 127–147 form a helical membrane-spanning segment; the sequence is VSMTTCSTLLALGMMPLCLLI. Topologically, residues 148-157 are cytoplasmic; the sequence is YTKMWVDSGS. Residues 158 to 178 form a helical membrane-spanning segment; the sequence is IVIPYDNIGTSLVSLVVPVSI. Residues 179–195 lie on the Extracellular side of the membrane; that stretch reads GMFVNHKWPQKAKIILK. Residues 196–216 form a helical membrane-spanning segment; the sequence is IGSIAGAILIVLIAVVGGILY. The Cytoplasmic segment spans residues 217-224; the sequence is QSAWIIAP. A helical transmembrane segment spans residues 225–245; it reads KLWIIGTIFPVAGYSLGFLLA. Residues 246–284 lie on the Extracellular side of the membrane; the sequence is RIAGLPWYRCRTVAFETGMQNTQLCSTIVQLSFTPEELN. A helical transmembrane segment spans residues 285–305; it reads VVFTFPLIYSIFQLAFAAIFL. Over 306 to 348 the chain is Cytoplasmic; it reads GFYVAYKKCHGKNKAEIPESKENGTEPESSFYKANGGFQPDEK. A compositionally biased stretch (basic and acidic residues) spans 320–329; sequence AEIPESKENG. Residues 320-348 form a disordered region; the sequence is AEIPESKENGTEPESSFYKANGGFQPDEK. S335 is subject to Phosphoserine.

It belongs to the bile acid:sodium symporter (BASS) (TC 2.A.28) family. As to quaternary structure, monomer and homodimer. As to expression, mainly expressed in ileum and kidney, lower expression in cecum.

The protein localises to the membrane. It carries out the reaction taurocholate(out) + 2 Na(+)(out) = taurocholate(in) + 2 Na(+)(in). The catalysed reaction is cholate(out) + 2 Na(+)(out) = cholate(in) + 2 Na(+)(in). It catalyses the reaction taurochenodeoxycholate(out) + 2 Na(+)(out) = taurochenodeoxycholate(in) + 2 Na(+)(in). The enzyme catalyses tauroursodeoxycholate(out) + 2 Na(+)(out) = tauroursodeoxycholate(in) + 2 Na(+)(in). It carries out the reaction glycocholate(out) + 2 Na(+)(out) = glycocholate(in) + 2 Na(+)(in). The catalysed reaction is tauronorcholate(out) + 2 Na(+)(out) = tauronorcholate(in) + 2 Na(+)(in). It catalyses the reaction tauroallocholate(out) + 2 Na(+)(out) = tauroallocholate(in) + 2 Na(+)(in). The enzyme catalyses taurodeoxycholate(out) + 2 Na(+)(out) = taurodeoxycholate(in) + 2 Na(+)(in). It carries out the reaction tauro-beta-muricholate(out) + 2 Na(+)(out) = tauro-beta-muricholate(in) + 2 Na(+)(in). Its function is as follows. Plays a critical role in the sodium-dependent reabsorption of bile acids from the lumen of the small intestine. Transports various bile acids, unconjugated or conjugated, such as cholate and taurocholate. Also responsible for bile acid transport in the renal proximal tubules, a salvage mechanism that helps conserve bile acids. Works collaboratively with the Na(+)-taurocholate cotransporting polypeptide (NTCP), the organic solute transporter (OST), and the bile salt export pump (BSEP), to ensure efficacious biological recycling of bile acids during enterohepatic circulation. The chain is Ileal sodium/bile acid cotransporter (SLC10A2) from Homo sapiens (Human).